The primary structure comprises 607 residues: MFTGVRRFDPTQGGQASPVPFKKVKHEEEESKPETNADEHSEVEYEEESGDDSMDEAEEAKKPVEVKDEEESEDENLTADQKRKKKQEAANLAKRAEEKALERKRKREQHMGEEDSDSEDDLAPIKISGNNKIKLAKGTIRAKGFEELPQTEIYEDKPDESATISRKTQLQTQPILRNATYVEIDDVGSFDEFDLSKNMMKNLDTLGYTKAFSVQKAVIPWLLAQQKLLAPDRKPDLLVSASTGSGKTATYGIPIIEKLRDRIVPRIRAVVVLPTKPLVMQVRDVLENLSKGSSLSVVALRNDRSTKRERAVLETADIVVAAPGRLVEQVKENPELFSYIEFLVVDEADRLLGQDYYDWASVLQNNQQRAQAGKTNLTEHYVRNMQTLIFSATLTANPEHIASMDIHNPGVFVIGSSDSYSIPKSLTEIVTHVSAAEKPLMLCELLVQRDINRGVVFTKSSETAARVARMMEIMDADIFHKDWKIAAVSAETSSVHRRRSMKQFIDGKIDFLVCTDLVSRGIDFVVDNVINYDIPSGKREYVHRVGRTARAGREGNAYTFLTGSGEAKWFREIGEFVGRTQEVDATHINSSHNDGYQEALAKLEEEV.

A disordered region spans residues 1–124 (MFTGVRRFDP…DSDSEDDLAP (124 aa)). Residues 25 to 43 (KHEEEESKPETNADEHSEV) are compositionally biased toward basic and acidic residues. Composition is skewed to acidic residues over residues 44 to 58 (EYEE…DEAE) and 67 to 77 (KDEEESEDENL). Residues 188–216 (GSFDEFDLSKNMMKNLDTLGYTKAFSVQK) carry the Q motif motif. Positions 228–412 (LLAPDRKPDL…SMDIHNPGVF (185 aa)) constitute a Helicase ATP-binding domain. Residue 241-248 (ASTGSGKT) coordinates ATP. The DEAD box signature appears at 346–349 (DEAD). The region spanning 441–592 (MLCELLVQRD…VDATHINSSH (152 aa)) is the Helicase C-terminal domain.

This sequence belongs to the DEAD box helicase family. DDX51/DBP6 subfamily. Associated with pre-ribosomal particles.

The protein resides in the nucleus. It localises to the nucleolus. It catalyses the reaction ATP + H2O = ADP + phosphate + H(+). Functionally, ATP-binding RNA helicase involved in the biogenesis of 60S ribosomal subunits and is required for the normal formation of 25S and 5.8S rRNAs. This chain is ATP-dependent RNA helicase DBP6 (DBP6), found in Yarrowia lipolytica (strain CLIB 122 / E 150) (Yeast).